Reading from the N-terminus, the 188-residue chain is Elongation factor P (188 aa).

This sequence belongs to the elongation factor P family.

Its subcellular location is the cytoplasm. Its pathway is protein biosynthesis; polypeptide chain elongation. Its function is as follows. Involved in peptide bond synthesis. Stimulates efficient translation and peptide-bond synthesis on native or reconstituted 70S ribosomes in vitro. Probably functions indirectly by altering the affinity of the ribosome for aminoacyl-tRNA, thus increasing their reactivity as acceptors for peptidyl transferase. This chain is Elongation factor P, found in Ralstonia nicotianae (strain ATCC BAA-1114 / GMI1000) (Ralstonia solanacearum).